We begin with the raw amino-acid sequence, 359 residues long: Fructose-1,6-bisphosphatase class 1 (359 aa).

The Mg(2+) site is built by E95, D117, L119, and D120. Substrate is bound by residues 120–123 (DGSS) and N212. Residue E284 coordinates Mg(2+).

This sequence belongs to the FBPase class 1 family. Homotetramer. It depends on Mg(2+) as a cofactor.

The protein resides in the cytoplasm. It carries out the reaction beta-D-fructose 1,6-bisphosphate + H2O = beta-D-fructose 6-phosphate + phosphate. It functions in the pathway carbohydrate biosynthesis; gluconeogenesis. This chain is Fructose-1,6-bisphosphatase class 1, found in Hydrogenophilus thermoluteolus (Pseudomonas hydrogenothermophila).